Reading from the N-terminus, the 334-residue chain is Mediator of RNA polymerase II transcription subunit 4 (334 aa).

Positions 71 to 100 (QEREQLIRTLEAHVEKRDEVIQQLETNLKS) form a coiled coil. A disordered region spans residues 193–334 (PLITSPSASS…ASKKTGSSNK (142 aa)). Composition is skewed to polar residues over residues 194 to 206 (LITS…SNGG) and 251 to 282 (NEKQ…SSPN).

The protein belongs to the Mediator complex subunit 4 family. As to quaternary structure, component of the Mediator complex.

It localises to the nucleus. Functionally, component of the Mediator complex, a coactivator involved in the regulated transcription of nearly all RNA polymerase II-dependent genes. Mediator functions as a bridge to convey information from gene-specific regulatory proteins to the basal RNA polymerase II transcription machinery. Mediator is recruited to promoters by direct interactions with regulatory proteins and serves as a scaffold for the assembly of a functional preinitiation complex with RNA polymerase II and the general transcription factors. This is Mediator of RNA polymerase II transcription subunit 4 (mdt-4) from Caenorhabditis elegans.